A 175-amino-acid polypeptide reads, in one-letter code: Large ribosomal subunit protein uL15 (175 aa).

Disordered stretches follow at residues Met1–Phe65 and Pro155–Ala175. Over residues Arg12–Gly21 the composition is skewed to basic residues. Gly residues predominate over residues Arg22–Gly38. A compositionally biased stretch (low complexity) spans Lys160 to Ala169.

The protein belongs to the universal ribosomal protein uL15 family. In terms of assembly, part of the 50S ribosomal subunit.

Its function is as follows. Binds to the 23S rRNA. The protein is Large ribosomal subunit protein uL15 of Myxococcus xanthus (strain DK1622).